A 307-amino-acid polypeptide reads, in one-letter code: MKLIFAGTPEFAAAALRELIAAGHEIALVLTQPDRPAGRGMKLKPSPVKEVALAHGLRVEQPEKLRGNQEAQQMLRDIQADVMVVAAYGLILPQDVLDIPARGCLNIHASLLPRWRGAAPIQRAILAGDDETGITIMQMDVGLDTGDMLSIHPVAIAADETAATLHDKLAACGAQAIVETLGRLDRIVPRKQPEDGVTYAQKLSKAEAEVDWALPAEQVARAIRAYNPAPGAFTQLGGEPLKLWMASAEPGSAEPGAVVSADADGVLVGAGQGLVRVSVLQAAGGKRLAARDFVAGKSLPAGTRLGV.

110 to 113 (SLLP) contributes to the (6S)-5,6,7,8-tetrahydrofolate binding site.

It belongs to the Fmt family.

The enzyme catalyses L-methionyl-tRNA(fMet) + (6R)-10-formyltetrahydrofolate = N-formyl-L-methionyl-tRNA(fMet) + (6S)-5,6,7,8-tetrahydrofolate + H(+). Attaches a formyl group to the free amino group of methionyl-tRNA(fMet). The formyl group appears to play a dual role in the initiator identity of N-formylmethionyl-tRNA by promoting its recognition by IF2 and preventing the misappropriation of this tRNA by the elongation apparatus. The sequence is that of Methionyl-tRNA formyltransferase from Chromobacterium violaceum (strain ATCC 12472 / DSM 30191 / JCM 1249 / CCUG 213 / NBRC 12614 / NCIMB 9131 / NCTC 9757 / MK).